A 274-amino-acid chain; its full sequence is PTS system sorbose-specific EIID component (274 aa).

Positions 4–273 (KKITQGDLVS…GIIGNALGFL (270 aa)) constitute a PTS EIID domain. 6 helical membrane passes run 61–81 (LVFF…TAAM), 99–119 (IKVG…WGTL), 126–146 (LGAS…FFIF), 186–206 (ILGL…NVPL), 226–246 (ILDQ…MVRL), and 253–273 (PVWL…LGFL).

Its subcellular location is the cell inner membrane. Functionally, the phosphoenolpyruvate-dependent sugar phosphotransferase system (PTS), a major carbohydrate active transport system, catalyzes the phosphorylation of incoming sugar substrates concomitant with their translocation across the cell membrane. The enzyme II SorABFM PTS system is involved in sorbose transport. The sequence is that of PTS system sorbose-specific EIID component from Klebsiella pneumoniae.